The following is an 87-amino-acid chain: Putative defensin-like protein 317 (87 aa).

Positions Met1–Gly24 are cleaved as a signal peptide. Disulfide bonds link Cys38–Cys71, Cys47–Cys80, and Cys56–Cys82.

It belongs to the DEFL family.

It is found in the secreted. This chain is Putative defensin-like protein 317, found in Arabidopsis thaliana (Mouse-ear cress).